The following is a 721-amino-acid chain: Ribosomal RNA large subunit methyltransferase K/L (721 aa).

The region spanning 56-167 is the THUMP domain; it reads GMYKACLWSR…REVVTVSIDL (112 aa).

The protein belongs to the methyltransferase superfamily. RlmKL family.

The protein resides in the cytoplasm. It carries out the reaction guanosine(2445) in 23S rRNA + S-adenosyl-L-methionine = N(2)-methylguanosine(2445) in 23S rRNA + S-adenosyl-L-homocysteine + H(+). It catalyses the reaction guanosine(2069) in 23S rRNA + S-adenosyl-L-methionine = N(2)-methylguanosine(2069) in 23S rRNA + S-adenosyl-L-homocysteine + H(+). Functionally, specifically methylates the guanine in position 2445 (m2G2445) and the guanine in position 2069 (m7G2069) of 23S rRNA. The sequence is that of Ribosomal RNA large subunit methyltransferase K/L from Marinomonas sp. (strain MWYL1).